A 364-amino-acid polypeptide reads, in one-letter code: Leucine-rich repeat-containing protein 19 (364 aa).

Residues 1–20 form the signal peptide; it reads MKVTRFMFWLFSMLLPSVKS. Residues 21–264 lie on the Extracellular side of the membrane; the sequence is QASETEVPCN…SEHEPLGKSW (244 aa). 4 N-linked (GlcNAc...) asparagine glycosylation sites follow: N30, N35, N46, and N88. LRR repeat units follow at residues 44–69, 70–93, 94–117, 118–141, 143–163, and 164–190; these read STNVTILDLSYNRITLNAADSRVLQM, YSLLTELYLMENNIIALYNSSFRN, LLNLEILNICGNSISVIQQGSFVG, LNELKQLFLCQNKILQLNPDTFVP, NNLKVLNLQGNLIRLFDAPQL, and PHLEILTLDGNPWNCTCGLLELHNWLN. The 52-residue stretch at 174–225 folds into the LRRCT domain; that stretch reads NPWNCTCGLLELHNWLNTSNVTLENENMTMCSYPDELKHDSIKSAPFTTECH. N-linked (GlcNAc...) asparagine glycans are attached at residues N177, N190, N193, N200, N241, N245, and N250. Residues 265-285 form a helical membrane-spanning segment; the sequence is AFLVGVVATVLLTSLLIFIAI. Residues 286–364 are Cytoplasmic-facing; it reads KCPVWYNILL…IDINEVHEEK (79 aa).

Interacts with TRAF2 and TRAF6. In terms of tissue distribution, strongly expressed in kidney, also expressed in spleen, intestine and colon. Highly expressed in epithelial cells. In kidney, mainly expressed in renal collecting duct epithelial cells.

The protein localises to the membrane. Activated by TLR ligands such as LPS, bacterial DNA and peptidoglycan. Its function is as follows. Pathogen-recognition receptor which mediates the activation of TRAF2- and TRAF6 NF-kappa-B signaling pathways and induces the expression of pro-inflammatory cytokines. In kidney, prevents infection by uropathogenic bacteria by inducing the production of cytokines, chemokines and antimicrobial substances. In gut, involved in host-microbiota interactions, plays a critical role in promoting the recruitment of immune cells and intestinal inflammation. The polypeptide is Leucine-rich repeat-containing protein 19 (Mus musculus (Mouse)).